We begin with the raw amino-acid sequence, 371 residues long: Glutamate 5-kinase (371 aa).

Position 12 (lysine 12) interacts with ATP. Substrate-binding residues include serine 52, aspartate 136, and asparagine 148. Residues 168–169 (SD) and 210–216 (TGGMRTK) each bind ATP. Residues 275–354 (QGEILVDEGA…EDIAEKFGYS (80 aa)) enclose the PUA domain.

This sequence belongs to the glutamate 5-kinase family.

The protein localises to the cytoplasm. The enzyme catalyses L-glutamate + ATP = L-glutamyl 5-phosphate + ADP. It participates in amino-acid biosynthesis; L-proline biosynthesis; L-glutamate 5-semialdehyde from L-glutamate: step 1/2. Its function is as follows. Catalyzes the transfer of a phosphate group to glutamate to form L-glutamate 5-phosphate. This chain is Glutamate 5-kinase, found in Idiomarina loihiensis (strain ATCC BAA-735 / DSM 15497 / L2-TR).